Consider the following 420-residue polypeptide: L-rhamnose isomerase (420 aa).

Positions 262, 294, and 296 each coordinate Mn(2+).

It belongs to the rhamnose isomerase family. Homotetramer. It depends on Mn(2+) as a cofactor.

The protein resides in the cytoplasm. The enzyme catalyses L-rhamnopyranose = L-rhamnulose. It functions in the pathway carbohydrate degradation; L-rhamnose degradation; glycerone phosphate from L-rhamnose: step 1/3. Functionally, catalyzes the interconversion of L-rhamnose and L-rhamnulose. This is L-rhamnose isomerase from Pectobacterium carotovorum subsp. carotovorum (strain PC1).